The sequence spans 287 residues: Glycine--tRNA ligase alpha subunit (287 aa).

This sequence belongs to the class-II aminoacyl-tRNA synthetase family. Tetramer of two alpha and two beta subunits.

The protein resides in the cytoplasm. It catalyses the reaction tRNA(Gly) + glycine + ATP = glycyl-tRNA(Gly) + AMP + diphosphate. This is Glycine--tRNA ligase alpha subunit from Campylobacter curvus (strain 525.92).